The primary structure comprises 266 residues: Undecaprenyl-diphosphatase (266 aa).

8 consecutive transmembrane segments (helical) span residues 1-21, 39-59, 87-107, 111-131, 144-164, 183-203, 218-238, and 246-266; these read MDTFQVIILALIQGLTEFLPI, QGLSFDVAVNTGSLLAVVMYF, WWIILATIPAVIVGFSAKGFI, FRSIEVIAATTIIFGLLLWWA, VGWKKALVIGIAQAMALIPGT, AAARFSFLMSVPVSLGAAILV, ALGLGIVVSFIAAYICIHYFL, and MTPFVVYRLALGAVLCGFIFL.

It belongs to the UppP family.

It is found in the cell inner membrane. The catalysed reaction is di-trans,octa-cis-undecaprenyl diphosphate + H2O = di-trans,octa-cis-undecaprenyl phosphate + phosphate + H(+). Its function is as follows. Catalyzes the dephosphorylation of undecaprenyl diphosphate (UPP). Confers resistance to bacitracin. The chain is Undecaprenyl-diphosphatase from Shewanella halifaxensis (strain HAW-EB4).